The primary structure comprises 331 residues: MTMVASWTRNHILDLTDWRGEELDIVLQTATTFQQVLSGQTKKVPALQGQVVTNLFFEPSTRTRSSFELAAKRLSADVMNFSPGTSSLTKGETILDTAKTYLAMGSDIFVIRHQQAGVPHFIASQMDRLQTGVKVLNAGDGQHEHPSQGLLDLFTICSQFAPDNPAIQCLQGKKIAVVGDILHSRVARSNLWSLTTAGADVHLAGPPTLLPKEFQQLTLAPGSGKLHCHWQLQPALEGADIVMTLRLQKERMTAHLLPSLREYHHYFGITHDRLKVCQPGVKVLHPGPVNRGVEISSELMDDPDISLIQDQVTSGVAIRMALLYLLGTVQE.

Residues Arg-62 and Thr-63 each contribute to the carbamoyl phosphate site. Position 90 (Lys-90) interacts with L-aspartate. 3 residues coordinate carbamoyl phosphate: Arg-112, His-145, and Gln-148. Positions 185 and 246 each coordinate L-aspartate. Carbamoyl phosphate-binding residues include Gly-287 and Pro-288.

The protein belongs to the aspartate/ornithine carbamoyltransferase superfamily. ATCase family. As to quaternary structure, heterododecamer (2C3:3R2) of six catalytic PyrB chains organized as two trimers (C3), and six regulatory PyrI chains organized as three dimers (R2).

The catalysed reaction is carbamoyl phosphate + L-aspartate = N-carbamoyl-L-aspartate + phosphate + H(+). It participates in pyrimidine metabolism; UMP biosynthesis via de novo pathway; (S)-dihydroorotate from bicarbonate: step 2/3. Its function is as follows. Catalyzes the condensation of carbamoyl phosphate and aspartate to form carbamoyl aspartate and inorganic phosphate, the committed step in the de novo pyrimidine nucleotide biosynthesis pathway. This is Aspartate carbamoyltransferase catalytic subunit from Synechocystis sp. (strain ATCC 27184 / PCC 6803 / Kazusa).